Consider the following 351-residue polypeptide: uncharacterized protein (351 aa).

This is an uncharacterized protein from Gallus gallus (Chicken).